The following is a 61-amino-acid chain: Small ribosomal subunit protein bS21 (61 aa).

Residues 40–61 (KPSVKRKKKSEAARKRKNKRRF) form a disordered region. Basic residues predominate over residues 43-61 (VKRKKKSEAARKRKNKRRF).

It belongs to the bacterial ribosomal protein bS21 family.

This is Small ribosomal subunit protein bS21 from Ligilactobacillus salivarius (strain UCC118) (Lactobacillus salivarius).